The sequence spans 113 residues: U11-theraphotoxin-Hhn1a (113 aa).

The N-terminal stretch at 1 to 21 (MNTVRVTFLLVFVLAVSLGQA) is a signal peptide. The propeptide occupies 22–74 (DKDENRMEMQEKTEQGKSYLDFAENLLLQKLEELEAKLLEEDSEESRNSRQKR). A disordered region spans residues 61-83 (EEDSEESRNSRQKRCIGEGVPCD). Disulfide bonds link Cys75/Cys90, Cys82/Cys95, and Cys89/Cys110.

The protein belongs to the neurotoxin 14 (magi-1) family. 01 (HNTX-16) subfamily. As to expression, expressed by the venom gland.

It localises to the secreted. In terms of biological role, probable ion channel inhibitor. This is U11-theraphotoxin-Hhn1a from Cyriopagopus hainanus (Chinese bird spider).